The following is a 314-amino-acid chain: Methionyl-tRNA formyltransferase (314 aa).

110–113 (SLLP) is a (6S)-5,6,7,8-tetrahydrofolate binding site.

Belongs to the Fmt family.

The enzyme catalyses L-methionyl-tRNA(fMet) + (6R)-10-formyltetrahydrofolate = N-formyl-L-methionyl-tRNA(fMet) + (6S)-5,6,7,8-tetrahydrofolate + H(+). Its function is as follows. Attaches a formyl group to the free amino group of methionyl-tRNA(fMet). The formyl group appears to play a dual role in the initiator identity of N-formylmethionyl-tRNA by promoting its recognition by IF2 and preventing the misappropriation of this tRNA by the elongation apparatus. The chain is Methionyl-tRNA formyltransferase from Bacillus cytotoxicus (strain DSM 22905 / CIP 110041 / 391-98 / NVH 391-98).